The primary structure comprises 729 residues: Dipeptidyl peptidase 3 (729 aa).

His-459 serves as a coordination point for Zn(2+). Residue Glu-460 is part of the active site. The Zn(2+) site is built by His-464 and Glu-517.

This sequence belongs to the peptidase M49 family. It depends on Zn(2+) as a cofactor.

It is found in the cytoplasm. The enzyme catalyses Release of an N-terminal dipeptide from a peptide comprising four or more residues, with broad specificity. Also acts on dipeptidyl 2-naphthylamides.. This is Dipeptidyl peptidase 3 (dpp3) from Nematostella vectensis (Starlet sea anemone).